An 839-amino-acid chain; its full sequence is Glycerol-3-phosphate acyltransferase (839 aa).

An HXXXXD motif motif is present at residues 309–314 (CHRSHI).

The protein belongs to the GPAT/DAPAT family.

Its subcellular location is the cell inner membrane. The enzyme catalyses sn-glycerol 3-phosphate + an acyl-CoA = a 1-acyl-sn-glycero-3-phosphate + CoA. It participates in phospholipid metabolism; CDP-diacylglycerol biosynthesis; CDP-diacylglycerol from sn-glycerol 3-phosphate: step 1/3. The protein is Glycerol-3-phosphate acyltransferase of Pseudomonas fluorescens (strain SBW25).